A 405-amino-acid chain; its full sequence is L-rhamnonate dehydratase (405 aa).

Residues His33 and Arg59 each coordinate substrate. The Mg(2+) site is built by Asp226, Glu252, and Glu280. His329 (proton acceptor) is an active-site residue. Substrate is bound at residue Glu349.

This sequence belongs to the mandelate racemase/muconate lactonizing enzyme family. RhamD subfamily. Homooctamer; tetramer of dimers. Mg(2+) is required as a cofactor.

It catalyses the reaction L-rhamnonate = 2-dehydro-3-deoxy-L-rhamnonate + H2O. Functionally, catalyzes the dehydration of L-rhamnonate to 2-keto-3-deoxy-L-rhamnonate (KDR). This is L-rhamnonate dehydratase from Salmonella paratyphi A (strain AKU_12601).